A 402-amino-acid chain; its full sequence is Rubredoxin-oxygen oxidoreductase (402 aa).

Residues 30–216 (PMGTTYNAYL…KAIETLVGAG (187 aa)) are zinc metallo-hydrolase. His79, Glu81, Asp83, His146, Asp165, and His226 together coordinate Fe cation. Residues 255–393 (VVIFYDSMWH…QLKTMAQTIA (139 aa)) enclose the Flavodoxin-like domain.

This sequence in the N-terminal section; belongs to the zinc metallo-hydrolase group 3 family. As to quaternary structure, homodimer. The cofactor is FMN. It depends on Fe cation as a cofactor.

Its pathway is energy metabolism; electron transfer. In terms of biological role, catalyzes the four-electron reduction of one oxygen molecule to two water molecules. The sequence is that of Rubredoxin-oxygen oxidoreductase (roo) from Megalodesulfovibrio gigas (strain ATCC 19364 / DSM 1382 / NCIMB 9332 / VKM B-1759) (Desulfovibrio gigas).